A 175-amino-acid chain; its full sequence is Large ribosomal subunit protein uL10 (175 aa).

Belongs to the universal ribosomal protein uL10 family. Part of the ribosomal stalk of the 50S ribosomal subunit. The N-terminus interacts with L11 and the large rRNA to form the base of the stalk. The C-terminus forms an elongated spine to which L12 dimers bind in a sequential fashion forming a multimeric L10(L12)X complex.

In terms of biological role, forms part of the ribosomal stalk, playing a central role in the interaction of the ribosome with GTP-bound translation factors. This Halorhodospira halophila (strain DSM 244 / SL1) (Ectothiorhodospira halophila (strain DSM 244 / SL1)) protein is Large ribosomal subunit protein uL10.